The sequence spans 569 residues: Protein THEMIS3 (569 aa).

CABIT regions lie at residues 1–254 (MEQT…ARLD) and 255–523 (RKPR…EERS).

Belongs to the themis family. As to expression, specifically expressed in the intestine.

This Mus musculus (Mouse) protein is Protein THEMIS3 (Themis3).